The chain runs to 389 residues: S-adenosylmethionine synthase (389 aa).

His15 is an ATP binding site. Asp17 lines the Mg(2+) pocket. Glu43 is a K(+) binding site. Glu56 and Gln99 together coordinate L-methionine. Positions 99-109 (QSPDIAQGVNE) are flexible loop. Residues 166-168 (DAK), 234-235 (RF), Asp243, 249-250 (RK), Ala266, and Lys270 each bind ATP. An L-methionine-binding site is contributed by Asp243. Lys274 contacts L-methionine.

This sequence belongs to the AdoMet synthase family. Homotetramer; dimer of dimers. Mg(2+) is required as a cofactor. It depends on K(+) as a cofactor.

The protein resides in the cytoplasm. The enzyme catalyses L-methionine + ATP + H2O = S-adenosyl-L-methionine + phosphate + diphosphate. It functions in the pathway amino-acid biosynthesis; S-adenosyl-L-methionine biosynthesis; S-adenosyl-L-methionine from L-methionine: step 1/1. Functionally, catalyzes the formation of S-adenosylmethionine (AdoMet) from methionine and ATP. The overall synthetic reaction is composed of two sequential steps, AdoMet formation and the subsequent tripolyphosphate hydrolysis which occurs prior to release of AdoMet from the enzyme. The chain is S-adenosylmethionine synthase from Neisseria gonorrhoeae (strain NCCP11945).